Here is a 235-residue protein sequence, read N- to C-terminus: Purine nucleoside phosphorylase DeoD-type (235 aa).

H4 is a binding site for a purine D-ribonucleoside. Phosphate-binding positions include G20, R24, R43, and 87–90 (RVGT). A purine D-ribonucleoside contacts are provided by residues 179–181 (EME) and 203–204 (SD). Catalysis depends on D204, which acts as the Proton donor.

It belongs to the PNP/UDP phosphorylase family. Homohexamer; trimer of homodimers.

The catalysed reaction is a purine D-ribonucleoside + phosphate = a purine nucleobase + alpha-D-ribose 1-phosphate. It carries out the reaction a purine 2'-deoxy-D-ribonucleoside + phosphate = a purine nucleobase + 2-deoxy-alpha-D-ribose 1-phosphate. Catalyzes the reversible phosphorolytic breakdown of the N-glycosidic bond in the beta-(deoxy)ribonucleoside molecules, with the formation of the corresponding free purine bases and pentose-1-phosphate. The sequence is that of Purine nucleoside phosphorylase DeoD-type from Brevibacillus brevis (strain 47 / JCM 6285 / NBRC 100599).